The primary structure comprises 302 residues: Urease accessory protein UreG (302 aa).

Basic and acidic residues-rich tracts occupy residues 1 to 32 (MHDPGEHGHGRHDHDHDHDHVHDHDHDHDHVH), 40 to 56 (HEHEHAHEHAHGHEHGH), and 64 to 76 (HAHEHAHGHTHEH). The tract at residues 1–76 (MHDPGEHGHG…EHAHGHTHEH (76 aa)) is disordered. A GTP-binding site is contributed by 105-112 (GPVGSGKT).

This sequence belongs to the SIMIBI class G3E GTPase family. UreG subfamily. Homodimer. UreD, UreF and UreG form a complex that acts as a GTP-hydrolysis-dependent molecular chaperone, activating the urease apoprotein by helping to assemble the nickel containing metallocenter of UreC. The UreE protein probably delivers the nickel.

Its subcellular location is the cytoplasm. Its function is as follows. Facilitates the functional incorporation of the urease nickel metallocenter. This process requires GTP hydrolysis, probably effectuated by UreG. This is Urease accessory protein UreG from Sorangium cellulosum (strain So ce56) (Polyangium cellulosum (strain So ce56)).